Reading from the N-terminus, the 267-residue chain is Imidazole glycerol phosphate synthase subunit HisF (267 aa).

Residues aspartate 21 and aspartate 140 contribute to the active site.

Belongs to the HisA/HisF family. As to quaternary structure, heterodimer of HisH and HisF.

Its subcellular location is the cytoplasm. It carries out the reaction 5-[(5-phospho-1-deoxy-D-ribulos-1-ylimino)methylamino]-1-(5-phospho-beta-D-ribosyl)imidazole-4-carboxamide + L-glutamine = D-erythro-1-(imidazol-4-yl)glycerol 3-phosphate + 5-amino-1-(5-phospho-beta-D-ribosyl)imidazole-4-carboxamide + L-glutamate + H(+). It functions in the pathway amino-acid biosynthesis; L-histidine biosynthesis; L-histidine from 5-phospho-alpha-D-ribose 1-diphosphate: step 5/9. Its function is as follows. IGPS catalyzes the conversion of PRFAR and glutamine to IGP, AICAR and glutamate. The HisF subunit catalyzes the cyclization activity that produces IGP and AICAR from PRFAR using the ammonia provided by the HisH subunit. The sequence is that of Imidazole glycerol phosphate synthase subunit HisF from Bordetella avium (strain 197N).